The primary structure comprises 146 residues: Leghemoglobin Lb120-1 (146 aa).

Residues 2 to 146 enclose the Globin domain; that stretch reads GFTEKQEALV…LASAIKKAMN (145 aa). 2 positions are modified to nitrated tyrosine: tyrosine 24 and tyrosine 29. Residue serine 44 coordinates heme b. At serine 44 the chain carries Phosphoserine. Histidine 61 is a binding site for O2. Heme b-binding residues include lysine 64, histidine 93, and lysine 96. Tyrosine 134 is modified (nitrated tyrosine).

Belongs to the plant globin family. In terms of assembly, monomer. Post-translationally, nitrated in effective nodules and particularly in hypoxic conditions; this mechanism may play a protective role in the symbiosis by buffering toxic peroxynitrite NO(2)(-). Nitration level decrease during nodule senescence. Phosphorylation at Ser-44 disrupts the molecular environment of its porphyrin ring oxygen binding pocket, thus leading to a reduced oxygen consumption and to the delivery of oxygen O(2) to symbiosomes. As to expression, root nodules.

The protein localises to the cytoplasm. The protein resides in the cytosol. It localises to the nucleus. Its function is as follows. Leghemoglobin that reversibly binds oxygen O(2) through a pentacoordinated heme iron. In root nodules, facilitates the diffusion of oxygen to the bacteroids while preventing the bacterial nitrogenase from being inactivated by buffering dioxygen, nitric oxide and carbon monoxide, and promoting the formation of reactive oxygen species (ROS, e.g. H(2)O(2)). This role is essential for symbiotic nitrogen fixation (SNF). The chain is Leghemoglobin Lb120-1 from Pisum sativum (Garden pea).